The sequence spans 179 residues: Probable chorismate pyruvate-lyase (179 aa).

Residues arginine 82, leucine 120, and glutamate 165 each contribute to the substrate site.

It belongs to the UbiC family.

The protein localises to the cytoplasm. It carries out the reaction chorismate = 4-hydroxybenzoate + pyruvate. Its pathway is cofactor biosynthesis; ubiquinone biosynthesis. In terms of biological role, removes the pyruvyl group from chorismate, with concomitant aromatization of the ring, to provide 4-hydroxybenzoate (4HB) for the ubiquinone pathway. In Vibrio vulnificus (strain CMCP6), this protein is Probable chorismate pyruvate-lyase.